A 218-amino-acid polypeptide reads, in one-letter code: Cytidylate kinase (218 aa).

Position 10–18 (G10–T18) interacts with ATP.

Belongs to the cytidylate kinase family. Type 1 subfamily.

It is found in the cytoplasm. The catalysed reaction is CMP + ATP = CDP + ADP. It carries out the reaction dCMP + ATP = dCDP + ADP. In Staphylococcus haemolyticus (strain JCSC1435), this protein is Cytidylate kinase.